A 242-amino-acid chain; its full sequence is Exosome complex component ski6 (242 aa).

This sequence belongs to the RNase PH family. Component of the RNA exosome complex. Specifically part of the catalytically inactive RNA exosome core complex (Exo-9) which may associate with the catalytic subunits rrp6 and dis3 in cytoplasmic- and nuclear-specific RNA exosome complex forms. Exo-9 is formed by a hexameric base ring of RNase PH domain-containing subunits and a cap ring consisting of csl4, rrp4 and rrp40.

Its subcellular location is the cytoplasm. The protein resides in the nucleus. It is found in the nucleolus. Its function is as follows. Non-catalytic component of the RNA exosome complex which has 3'-&gt;5' exoribonuclease activity and participates in a multitude of cellular RNA processing and degradation events. In the nucleus, the RNA exosome complex is involved in proper maturation of stable RNA species such as rRNA, snRNA and snoRNA, in the elimination of RNA processing by-products and non-coding 'pervasive' transcripts, such as antisense RNA species and cryptic unstable transcripts (CUTs), and of mRNAs with processing defects, thereby limiting or excluding their export to the cytoplasm. In the cytoplasm, the RNA exosome complex is involved in general mRNA turnover and in RNA surveillance pathways, preventing translation of aberrant mRNAs. The catalytic inactive RNA exosome core complex of 9 subunits (Exo-9) is proposed to play a pivotal role in the binding and presentation of RNA for ribonucleolysis, and to serve as a scaffold for the association with catalytic subunits and accessory proteins or complexes. ski6 is part of the hexameric ring of RNase PH domain-containing subunits proposed to form a central channel which threads RNA substrates for degradation. This chain is Exosome complex component ski6 (ski6), found in Schizosaccharomyces pombe (strain 972 / ATCC 24843) (Fission yeast).